We begin with the raw amino-acid sequence, 142 residues long: Ribosomal RNA large subunit methyltransferase H (142 aa).

S-adenosyl-L-methionine is bound at residue Gly89.

It belongs to the RNA methyltransferase RlmH family. In terms of assembly, homodimer.

Its subcellular location is the cytoplasm. The enzyme catalyses pseudouridine(1915) in 23S rRNA + S-adenosyl-L-methionine = N(3)-methylpseudouridine(1915) in 23S rRNA + S-adenosyl-L-homocysteine + H(+). Its function is as follows. Specifically methylates the pseudouridine at position 1915 (m3Psi1915) in 23S rRNA. This chain is Ribosomal RNA large subunit methyltransferase H, found in Zymomonas mobilis subsp. mobilis (strain ATCC 31821 / ZM4 / CP4).